The primary structure comprises 131 residues: Global transcriptional regulator Spx (131 aa).

Cys10 and Cys13 form a disulfide bridge.

This sequence belongs to the ArsC family. Spx subfamily. Interacts with the C-terminal domain of the alpha subunit of the RNAP.

It is found in the cytoplasm. Its function is as follows. Global transcriptional regulator that plays a key role in stress response and exerts either positive or negative regulation of genes. Acts by interacting with the C-terminal domain of the alpha subunit of the RNA polymerase (RNAP). This interaction can enhance binding of RNAP to the promoter region of target genes and stimulate their transcription, or block interaction of RNAP with activator. The chain is Global transcriptional regulator Spx from Staphylococcus epidermidis (strain ATCC 35984 / DSM 28319 / BCRC 17069 / CCUG 31568 / BM 3577 / RP62A).